The following is a 107-amino-acid chain: MHCDIYKFLKHDDMYIYIARPDYPNDTDEIKDWLGVLPKDFRAGLGRSKFVMHLDLATTPALARVDKEEVLAKLASQGYFVQLPPQDVMRRQAELHARESQDSIYNT.

Positions 1-95 constitute a YcgL domain; the sequence is MHCDIYKFLK…QDVMRRQAEL (95 aa).

The sequence is that of YcgL domain-containing protein Psyc_0800 from Psychrobacter arcticus (strain DSM 17307 / VKM B-2377 / 273-4).